The chain runs to 2339 residues: Inverse autotransporter adhesin YeeJ (2339 aa).

A signal peptide spans 1-26 (MGIKLRRLTAGICLITQLAFPMAAAA). The 49-residue stretch at 50–98 (VPYTLGALESAQSVAERFGISVAELRKLNQFRTFARGFDNVRQGDELDV) folds into the LysM domain. Residues 125–400 (TSQQIGSLLA…SRYDLVDRNN (276 aa)) are inverse autotransporter. The segment at 513–605 (QKDSSVSLST…GVDAAKAPAV (93 aa)) is invasin 3 domain. Big-1 domains lie at 721-815 (IATL…VSFV), 822-913 (QVDL…VNFI), 920-1017 (ALTL…MTFV), 1024-1121 (VVVL…VTFV), 1128-1221 (QVVL…VHFI), 1229-1331 (IIEL…SINV), 1339-1432 (HLTL…VTYV), 1439-1535 (EITL…VNFI), 1542-1639 (QVNL…VTLI), 1646-1730 (KLAS…PTEV), 1746-1837 (ITSL…LEAI), 1840-1934 (KLTL…VKVT), and 1942-2034 (VASF…ITLV). Positions 2236-2339 (KSWWVNAGEA…FAYATCYKNL (104 aa)) are C-type lectin domain.

It belongs to the intimin/invasin family.

The protein resides in the cell outer membrane. In terms of biological role, a cryptic inverse autotransporter, it is not expressed in wild-type strain MG1655. Upon overexpression shows increased adherence to polyvinyl chloride (PVC) plates and increased mature biofilm formation. Probably binds peptidoglycan. This chain is Inverse autotransporter adhesin YeeJ (yeeJ), found in Escherichia coli (strain K12).